Consider the following 577-residue polypeptide: NKAP family protein UM04995 (577 aa).

The disordered stretch occupies residues Met-1–Gly-479. The span at Lys-20–Ser-31 shows a compositional bias: basic and acidic residues. The segment covering Ser-36–Ala-49 has biased composition (polar residues). Basic and acidic residues predominate over residues Ser-50 to Leu-60. Low complexity predominate over residues Ser-70–Ser-89. Basic and acidic residues-rich tracts occupy residues Pro-127–Arg-163, Ser-170–Pro-193, and Asp-265–His-297. Composition is skewed to basic residues over residues Ser-298–Ser-316 and Ser-325–His-336. Positions Asp-340–Asp-350 are enriched in acidic residues. Residues Lys-363 to Ser-385 show a composition bias toward basic and acidic residues. A compositionally biased stretch (basic residues) spans Ser-386–Ser-395. Basic and acidic residues-rich tracts occupy residues Asp-396 to Lys-408 and Ser-417 to Ser-439. Residues Arg-529–Gln-570 adopt a coiled-coil conformation.

It belongs to the NKAP family.

This is NKAP family protein UM04995 from Mycosarcoma maydis (Corn smut fungus).